Reading from the N-terminus, the 332-residue chain is Eukaryotic translation initiation factor 3 subunit H (332 aa).

The 136-residue stretch at 18-153 (VQVDGLTVLK…LKAFRLSDEM (136 aa)) folds into the MPN domain. The interval 251 to 285 (QQQKENYLQRRQQENQSRIQRGEDPLPDEDLSKMF) is disordered.

Belongs to the eIF-3 subunit H family. Component of the eukaryotic translation initiation factor 3 (eIF-3) complex.

The protein localises to the cytoplasm. Its function is as follows. Component of the eukaryotic translation initiation factor 3 (eIF-3) complex, which is involved in protein synthesis of a specialized repertoire of mRNAs and, together with other initiation factors, stimulates binding of mRNA and methionyl-tRNAi to the 40S ribosome. The eIF-3 complex specifically targets and initiates translation of a subset of mRNAs involved in cell proliferation. This chain is Eukaryotic translation initiation factor 3 subunit H, found in Nematostella vectensis (Starlet sea anemone).